The sequence spans 1772 residues: Putative stereocilin-like protein (1772 aa).

Positions 1–25 are cleaved as a signal peptide; it reads MALSLWPLLLLLLLLLLLSFAVTLA. Asn65, Asn427, Asn476, and Asn565 each carry an N-linked (GlcNAc...) asparagine glycan.

Belongs to the stereocilin family.

It is found in the secreted. The chain is Putative stereocilin-like protein (STRCP1) from Homo sapiens (Human).